Reading from the N-terminus, the 329-residue chain is Cysteine synthase (329 aa).

Lysine 48 carries the post-translational modification N6-(pyridoxal phosphate)lysine. Residues asparagine 78, 183 to 187 (GTGGT), and serine 278 contribute to the pyridoxal 5'-phosphate site.

This sequence belongs to the cysteine synthase/cystathionine beta-synthase family. In terms of assembly, homodimer. It depends on pyridoxal 5'-phosphate as a cofactor.

The enzyme catalyses O-acetyl-L-serine + hydrogen sulfide = L-cysteine + acetate. It functions in the pathway amino-acid biosynthesis; L-cysteine biosynthesis; L-cysteine from L-serine: step 2/2. Catalyzes the conversion of O-acetylserine (OAS) to cysteine through the elimination of acetate and addition of hydrogen sulfide. This chain is Cysteine synthase (srpG), found in Synechococcus elongatus (strain ATCC 33912 / PCC 7942 / FACHB-805) (Anacystis nidulans R2).